The sequence spans 509 residues: ESX-2 secretion system protein eccD2 (509 aa).

A run of 11 helical transmembrane segments spans residues 135–155 (LTAAHTAMAIIAMAVGVVLAL), 170–190 (AMAGGIGVLLVIGALVVWWGW), 196–216 (LFSGFGWLAVVLLAVAAACAP), 222–242 (AAHALIGLVVVVLGAITIGVA), 248–268 (QTAVVTAVVTVCGILAAVAAV), 281–301 (ICVLVGLLVLIRMTPTVALWV), 364–384 (VQVGMCVGVSLVLPAAVWGVL), 389–409 (PWAWLALLVAGLTVGLFITQG), 418–438 (AVALVCGASAAVCAGVLKYAL), 449–469 (LWPAIFVAAFAALGLAVALVV), and 487–507 (VLAMIALLPAAAALGGLFAWL).

The protein belongs to the EccD/Snm4 family. In terms of assembly, part of the ESX-2 / type VII secretion system (T7SS), which is composed of cytosolic and membrane components.

It is found in the cell membrane. The chain is ESX-2 secretion system protein eccD2 (eccD2) from Mycobacterium tuberculosis (strain CDC 1551 / Oshkosh).